Consider the following 388-residue polypeptide: Acetate kinase (388 aa).

Asn-7 provides a ligand contact to Mg(2+). Lys-14 serves as a coordination point for ATP. Arg-76 contacts substrate. The Proton donor/acceptor role is filled by Asp-133. ATP is bound by residues 193-197 (HLGNG), 267-269 (DMR), and 315-319 (GIGEN). A Mg(2+)-binding site is contributed by Glu-374.

It belongs to the acetokinase family. Homodimer. Requires Mg(2+) as cofactor. The cofactor is Mn(2+).

It is found in the cytoplasm. It catalyses the reaction acetate + ATP = acetyl phosphate + ADP. It participates in metabolic intermediate biosynthesis; acetyl-CoA biosynthesis; acetyl-CoA from acetate: step 1/2. Functionally, catalyzes the formation of acetyl phosphate from acetate and ATP. Can also catalyze the reverse reaction. In Micrococcus luteus (strain ATCC 4698 / DSM 20030 / JCM 1464 / CCM 169 / CCUG 5858 / IAM 1056 / NBRC 3333 / NCIMB 9278 / NCTC 2665 / VKM Ac-2230) (Micrococcus lysodeikticus), this protein is Acetate kinase.